Consider the following 59-residue polypeptide: uncharacterized protein (59 aa).

An ATP-binding site is contributed by 33-40 (GRRRVGKT).

This is an uncharacterized protein from Methanocaldococcus jannaschii (strain ATCC 43067 / DSM 2661 / JAL-1 / JCM 10045 / NBRC 100440) (Methanococcus jannaschii).